A 387-amino-acid chain; its full sequence is Acetylornithine deacetylase (387 aa).

H80 contributes to the Zn(2+) binding site. D82 is an active-site residue. D112 provides a ligand contact to Zn(2+). The active site involves E144. Positions 145, 169, and 355 each coordinate Zn(2+).

This sequence belongs to the peptidase M20A family. ArgE subfamily. Homodimer. Zn(2+) serves as cofactor. Co(2+) is required as a cofactor. Requires glutathione as cofactor.

It is found in the cytoplasm. The catalysed reaction is N(2)-acetyl-L-ornithine + H2O = L-ornithine + acetate. It functions in the pathway amino-acid biosynthesis; L-arginine biosynthesis; L-ornithine from N(2)-acetyl-L-ornithine (linear): step 1/1. In terms of biological role, catalyzes the hydrolysis of the amide bond of N(2)-acetylated L-amino acids. Cleaves the acetyl group from N-acetyl-L-ornithine to form L-ornithine, an intermediate in L-arginine biosynthesis pathway, and a branchpoint in the synthesis of polyamines. This Proteus mirabilis (strain HI4320) protein is Acetylornithine deacetylase.